Consider the following 97-residue polypeptide: MANNKSAKKRIQIAERNRLINKSYKSTVRTLTKKTLENCEKYKKEPNDENKNLVTTSLNKAFSLIDKAVKKNVLHKNNGANRKSKINNFVKTTLTTK.

The protein belongs to the bacterial ribosomal protein bS20 family.

Its function is as follows. Binds directly to 16S ribosomal RNA. The polypeptide is Small ribosomal subunit protein bS20 (Prochlorococcus marinus (strain MIT 9301)).